The sequence spans 57 residues: Large ribosomal subunit protein bL32 (57 aa).

Belongs to the bacterial ribosomal protein bL32 family.

The chain is Large ribosomal subunit protein bL32 from Ureaplasma parvum serovar 3 (strain ATCC 27815 / 27 / NCTC 11736).